We begin with the raw amino-acid sequence, 167 residues long: Transmembrane protein 229B (167 aa).

Topologically, residues 1-14 are cytoplasmic; that stretch reads MAAAEPLTAFSRWY. Residues 15–35 form a helical membrane-spanning segment; the sequence is LYAIHGYFCEVMFTAAWEFVV. Topologically, residues 36–40 are extracellular; the sequence is NFNWK. Residues 41–61 form a helical membrane-spanning segment; that stretch reads FPGVTSVWALFIYGTSILIVE. Over 62–72 the chain is Cytoplasmic; the sequence is KMYLYLKDKCH. The helical transmembrane segment at 73–93 threads the bilayer; sequence ILVRCFIYTLWTYLWEFTTGL. Topologically, residues 94-109 are extracellular; sequence ILRQFNACPWDYSQFD. The chain crosses the membrane as a helical span at residues 110 to 130; sequence FDFMGLITLEYAIPWFCASFI. The Cytoplasmic segment spans residues 131-167; it reads MEQLVIRNTLRLRFDETAEPGAPTVPVALANGHVKTD.

The protein belongs to the TMEM229 family.

The protein localises to the membrane. This Gallus gallus (Chicken) protein is Transmembrane protein 229B (TMEM229B).